Here is a 244-residue protein sequence, read N- to C-terminus: Robin (244 aa).

The sequence is that of Robin from Acanthamoeba polyphaga (Amoeba).